A 1396-amino-acid chain; its full sequence is Integrin alpha-PS2 (1396 aa).

Positions 1–31 (MSGDSIHRRRMALHCPITSLILLLIAMSAHG) are cleaved as a signal peptide. At 32 to 1341 (YNIDLPSYVR…EPEPLQVPDV (1310 aa)) the chain is on the extracellular side. 7 FG-GAP repeats span residues 36–106 (LPSY…DCKL), 117–174 (NVDK…FTSH), 186–239 (RTNN…FPFK), 266–317 (STSE…RWNM), 318–383 (ANIF…TEEK), 386–445 (TTEH…GPLA), and 452–514 (KSEQ…FASN). N69 carries N-linked (GlcNAc...) asparagine glycosylation. N209 carries an N-linked (GlcNAc...) asparagine glycan. The N-linked (GlcNAc...) asparagine glycan is linked to N322. N584, N598, N741, N783, N833, and N959 each carry an N-linked (GlcNAc...) asparagine glycan. Disordered regions lie at residues 960 to 1107 (STDA…LGTL) and 1159 to 1246 (PGFQ…KPLQ). Residues 963–979 (AGDKLSPKQVEQRRQED) are compositionally biased toward basic and acidic residues. Residues 997-1006 (QAVQEPQVNQ) show a composition bias toward polar residues. Residue N1005 is glycosylated (N-linked (GlcNAc...) asparagine). Low complexity-rich tracts occupy residues 1007–1021 (TSFT…SSGS) and 1060–1071 (QQQQQHQQLLLA). A compositionally biased stretch (polar residues) spans 1082–1099 (VTFNDKSQFGGRNNNFHT). Low complexity-rich tracts occupy residues 1162 to 1182 (QGQT…GYQT) and 1217 to 1226 (SSSSSSSSSS). N-linked (GlcNAc...) asparagine glycosylation is found at N1299 and N1307. Residues 1342–1366 (VPLWVVVLAACAGALIFLLLVWLLY) traverse the membrane as a helical segment. Topologically, residues 1367–1396 (KCGFFNRNRPTDHSQERQPLRNGYHGDEHL) are cytoplasmic. A disordered region spans residues 1377–1396 (TDHSQERQPLRNGYHGDEHL).

The protein belongs to the integrin alpha chain family. In terms of assembly, heterodimer of an alpha and a beta subunit. The alpha subunit is composed of a heavy and a light chain linked by a disulfide bond. Alpha-PS2 associates with beta-PS. Post-translationally, the heavy-light chain cleavage site is either in 1230-1231, or 1233-1234, or 1243-1244. In ovaries, highly expressed in follicle cells. At syncytial blastoderm stage, expressed in the embryonic mesodermal precursors but not in the ectoderm. At embryonic stages 7 and 10, expression is restricted to the mesoderm. At stage 12, expressed in the gonadal sheath and the interstitial cells of the gonad. In stage 16 embryos, expressed in the somatic and visceral muscles where localizes to sites of attachment between adjacent muscles. In third larval instar wing imaginal disk, expressed in the ventral compartment and in a subset of adepithelial and peripodial cells (at protein level).

Its subcellular location is the apical cell membrane. It is found in the lateral cell membrane. The protein localises to the basal cell membrane. Its function is as follows. Alpha-PS2/beta-PS is a receptor for Tig, wb and Ten-m. Involved in the function and/or development of the olfactory system. This chain is Integrin alpha-PS2 (if), found in Drosophila melanogaster (Fruit fly).